A 216-amino-acid polypeptide reads, in one-letter code: Adenylate kinase (216 aa).

10 to 15 (GAGKGT) is an ATP binding site. Residues 30-59 (STGDIFRANIKEKTPLGIEAKRYIDNGQLV) are NMP. AMP-binding positions include T31, R36, 57 to 59 (QLV), 85 to 88 (GFPR), and Q92. Residues 126–163 (GRRVCTSCGASYHIRFNPPKIEGKCDICDNELIQRKDD) are LID. R127 contacts ATP. Zn(2+)-binding residues include C130 and C133. Residue 136–137 (SY) participates in ATP binding. C150 and C153 together coordinate Zn(2+). 2 residues coordinate AMP: R160 and R171. E199 is a binding site for ATP.

The protein belongs to the adenylate kinase family. As to quaternary structure, monomer.

The protein resides in the cytoplasm. It catalyses the reaction AMP + ATP = 2 ADP. It participates in purine metabolism; AMP biosynthesis via salvage pathway; AMP from ADP: step 1/1. In terms of biological role, catalyzes the reversible transfer of the terminal phosphate group between ATP and AMP. Plays an important role in cellular energy homeostasis and in adenine nucleotide metabolism. This is Adenylate kinase from Clostridium botulinum (strain ATCC 19397 / Type A).